Reading from the N-terminus, the 500-residue chain is L-arabinose isomerase (500 aa).

The Mn(2+) site is built by glutamate 306, glutamate 333, histidine 349, and histidine 448.

It belongs to the arabinose isomerase family. Mn(2+) is required as a cofactor.

The enzyme catalyses beta-L-arabinopyranose = L-ribulose. The protein operates within carbohydrate degradation; L-arabinose degradation via L-ribulose; D-xylulose 5-phosphate from L-arabinose (bacterial route): step 1/3. Its function is as follows. Catalyzes the conversion of L-arabinose to L-ribulose. This Shewanella sp. (strain MR-4) protein is L-arabinose isomerase.